Reading from the N-terminus, the 321-residue chain is tRNA U34 carboxymethyltransferase (321 aa).

Carboxy-S-adenosyl-L-methionine-binding positions include lysine 90, tryptophan 104, lysine 109, glycine 129, 151-153, 180-181, methionine 195, tyrosine 199, and arginine 314; these read DPT and IE.

This sequence belongs to the class I-like SAM-binding methyltransferase superfamily. CmoB family. In terms of assembly, homotetramer.

The catalysed reaction is carboxy-S-adenosyl-L-methionine + 5-hydroxyuridine(34) in tRNA = 5-carboxymethoxyuridine(34) in tRNA + S-adenosyl-L-homocysteine + H(+). Functionally, catalyzes carboxymethyl transfer from carboxy-S-adenosyl-L-methionine (Cx-SAM) to 5-hydroxyuridine (ho5U) to form 5-carboxymethoxyuridine (cmo5U) at position 34 in tRNAs. This is tRNA U34 carboxymethyltransferase from Haemophilus influenzae (strain 86-028NP).